The following is a 175-amino-acid chain: Adenine phosphoribosyltransferase (175 aa).

The protein belongs to the purine/pyrimidine phosphoribosyltransferase family. As to quaternary structure, homodimer.

The protein resides in the cytoplasm. It catalyses the reaction AMP + diphosphate = 5-phospho-alpha-D-ribose 1-diphosphate + adenine. It functions in the pathway purine metabolism; AMP biosynthesis via salvage pathway; AMP from adenine: step 1/1. In terms of biological role, catalyzes a salvage reaction resulting in the formation of AMP, that is energically less costly than de novo synthesis. The chain is Adenine phosphoribosyltransferase from Maricaulis maris (strain MCS10) (Caulobacter maris).